We begin with the raw amino-acid sequence, 433 residues long: Meiotically up-regulated gene 131 protein (433 aa).

Over residues 401–412 the composition is skewed to polar residues; the sequence is LSSQGREISNTL. The segment at 401 to 433 is disordered; it reads LSSQGREISNTLSRKRGAKGSNPFEIENMMPHA.

The protein belongs to the UPF0300 family.

It is found in the golgi apparatus. Has a role in meiosis. The protein is Meiotically up-regulated gene 131 protein (mug131) of Schizosaccharomyces pombe (strain 972 / ATCC 24843) (Fission yeast).